The primary structure comprises 178 residues: Ribosome maturation factor RimM (178 aa).

Positions 101 to 178 (ADEYYWYQLV…VMRVEWDADF (78 aa)) constitute a PRC barrel domain.

The protein belongs to the RimM family. In terms of assembly, binds ribosomal protein uS19.

The protein resides in the cytoplasm. Its function is as follows. An accessory protein needed during the final step in the assembly of 30S ribosomal subunit, possibly for assembly of the head region. Essential for efficient processing of 16S rRNA. May be needed both before and after RbfA during the maturation of 16S rRNA. It has affinity for free ribosomal 30S subunits but not for 70S ribosomes. In Pseudomonas putida (strain ATCC 700007 / DSM 6899 / JCM 31910 / BCRC 17059 / LMG 24140 / F1), this protein is Ribosome maturation factor RimM.